Here is a 262-residue protein sequence, read N- to C-terminus: Matrilysin (262 aa).

A signal peptide spans 1–12 (LCVLCLLPQSPA). A propeptide spans 13–89 (LPLPREAGGH…PRCGLPDTGE (77 aa)) (activation peptide). A Cysteine switch motif is present at residues 80–87 (PRCGLPDT). Cys82 serves as a coordination point for Zn(2+). Asp148 provides a ligand contact to Ca(2+). Residues His158 and Asp160 each coordinate Zn(2+). Residues Asp165, Gly166, Gly168, and Thr170 each coordinate Ca(2+). Position 173 (His173) interacts with Zn(2+). Gly180, Gly182, and Asp184 together coordinate Ca(2+). His186 provides a ligand contact to Zn(2+). Positions 188 and 191 each coordinate Ca(2+). Zn(2+) is bound at residue His209. The active site involves Glu210. The Zn(2+) site is built by His213 and His219.

Belongs to the peptidase M10A family. Requires Ca(2+) as cofactor. Zn(2+) serves as cofactor.

The protein resides in the secreted. It is found in the extracellular space. Its subcellular location is the extracellular matrix. It catalyses the reaction Cleavage of 14-Ala-|-Leu-15 and 16-Tyr-|-Leu-17 in B chain of insulin. No action on collagen types I, II, IV, V. Cleaves gelatin chain alpha2(I) &gt; alpha1(I).. Its function is as follows. Degrades casein, gelatins of types I, III, IV, and V, and fibronectin. Activates procollagenase. The protein is Matrilysin (MMP7) of Felis catus (Cat).